We begin with the raw amino-acid sequence, 283 residues long: Pantothenate synthetase (283 aa).

An ATP-binding site is contributed by 30-37; that stretch reads MGNLHDGH. H37 acts as the Proton donor in catalysis. Q61 provides a ligand contact to (R)-pantoate. Q61 contributes to the beta-alanine binding site. An ATP-binding site is contributed by 149 to 152; the sequence is GEKD. A (R)-pantoate-binding site is contributed by Q155. ATP is bound at residue 186–189; it reads LSSR.

It belongs to the pantothenate synthetase family. In terms of assembly, homodimer.

The protein resides in the cytoplasm. The catalysed reaction is (R)-pantoate + beta-alanine + ATP = (R)-pantothenate + AMP + diphosphate + H(+). It participates in cofactor biosynthesis; (R)-pantothenate biosynthesis; (R)-pantothenate from (R)-pantoate and beta-alanine: step 1/1. Catalyzes the condensation of pantoate with beta-alanine in an ATP-dependent reaction via a pantoyl-adenylate intermediate. This is Pantothenate synthetase from Escherichia coli O6:H1 (strain CFT073 / ATCC 700928 / UPEC).